A 397-amino-acid polypeptide reads, in one-letter code: Aspartate/prephenate aminotransferase (397 aa).

L-aspartate-binding residues include glycine 38, tryptophan 124, and asparagine 174. At lysine 238 the chain carries N6-(pyridoxal phosphate)lysine. An L-aspartate-binding site is contributed by arginine 375.

The protein belongs to the class-I pyridoxal-phosphate-dependent aminotransferase family. Homodimer. Requires pyridoxal 5'-phosphate as cofactor.

The protein resides in the cytoplasm. The enzyme catalyses L-aspartate + 2-oxoglutarate = oxaloacetate + L-glutamate. It carries out the reaction L-arogenate + 2-oxoglutarate = prephenate + L-glutamate. In terms of biological role, catalyzes the reversible conversion of aspartate and 2-oxoglutarate to glutamate and oxaloacetate. Can also transaminate prephenate in the presence of glutamate, with lower efficiency. This is Aspartate/prephenate aminotransferase from Nitrosomonas europaea (strain ATCC 19718 / CIP 103999 / KCTC 2705 / NBRC 14298).